The following is a 107-amino-acid chain: Integration host factor subunit alpha (107 aa).

Belongs to the bacterial histone-like protein family. As to quaternary structure, heterodimer of an alpha and a beta chain.

This protein is one of the two subunits of integration host factor, a specific DNA-binding protein that functions in genetic recombination as well as in transcriptional and translational control. This Mesorhizobium japonicum (strain LMG 29417 / CECT 9101 / MAFF 303099) (Mesorhizobium loti (strain MAFF 303099)) protein is Integration host factor subunit alpha.